Reading from the N-terminus, the 147-residue chain is UPF0260 protein Ent638_2368 (147 aa).

It belongs to the UPF0260 family.

This is UPF0260 protein Ent638_2368 from Enterobacter sp. (strain 638).